A 90-amino-acid chain; its full sequence is U7-theraphotoxin-Hhn1a 8 (90 aa).

The signal sequence occupies residues 1-19 (MKTAIFTVVLALAVFAVLS). Positions 20 to 50 (FGWEANEKALSEEFTELIHEKGAASETEARE) are excised as a propeptide. 3 disulfides stabilise this stretch: cysteine 51/cysteine 65, cysteine 58/cysteine 70, and cysteine 64/cysteine 81.

The protein belongs to the neurotoxin 10 (Hwtx-1) family. 13 (Hntx-13) subfamily. As to expression, expressed by the venom gland.

Its subcellular location is the secreted. Functionally, ion channel inhibitor. The polypeptide is U7-theraphotoxin-Hhn1a 8 (Cyriopagopus hainanus (Chinese bird spider)).